Reading from the N-terminus, the 312-residue chain is Ribosomal protein L11 methyltransferase (312 aa).

The S-adenosyl-L-methionine site is built by Thr162, Gly183, Asp205, and Asn248.

The protein belongs to the methyltransferase superfamily. PrmA family.

It localises to the cytoplasm. The enzyme catalyses L-lysyl-[protein] + 3 S-adenosyl-L-methionine = N(6),N(6),N(6)-trimethyl-L-lysyl-[protein] + 3 S-adenosyl-L-homocysteine + 3 H(+). Methylates ribosomal protein L11. The protein is Ribosomal protein L11 methyltransferase of Bacillus cereus (strain G9842).